Reading from the N-terminus, the 214-residue chain is Adenylate kinase (214 aa).

10–15 serves as a coordination point for ATP; that stretch reads GAGKGT. Residues 30-59 are NMP; sequence STGDMFREEISAKSELGRKVEDILKRGELV. AMP is bound by residues Thr31, Arg36, 57-59, 85-88, and Gln92; these read ELV and GYPR. The LID stretch occupies residues 126 to 163; the sequence is NRRICKNCGKIYNLITLPPKINGKCDVCGGELYQREDD. Residue Arg127 participates in ATP binding. Residues Cys130 and Cys133 each coordinate Zn(2+). 136–137 lines the ATP pocket; it reads IY. Residues Cys150 and Cys153 each coordinate Zn(2+). Arg160 and Arg171 together coordinate AMP. Met199 is a binding site for ATP.

The protein belongs to the adenylate kinase family. In terms of assembly, monomer.

The protein resides in the cytoplasm. The enzyme catalyses AMP + ATP = 2 ADP. It participates in purine metabolism; AMP biosynthesis via salvage pathway; AMP from ADP: step 1/1. Functionally, catalyzes the reversible transfer of the terminal phosphate group between ATP and AMP. Plays an important role in cellular energy homeostasis and in adenine nucleotide metabolism. This Thermosipho melanesiensis (strain DSM 12029 / CIP 104789 / BI429) protein is Adenylate kinase.